The following is a 706-amino-acid chain: Lethal(3)malignant brain tumor-like protein 2 (706 aa).

The tract at residues 1–85 (MEKPRGVEET…GTPRSLDGSG (85 aa)) is disordered. Ser-13 is subject to Phosphoserine. Residues 15–26 (PMEEEEEDDDLE) show a composition bias toward acidic residues. A compositionally biased stretch (low complexity) spans 39–50 (SSAGSESSSYLE). The segment covering 54-63 (EAEHEDREAG) has biased composition (basic and acidic residues). At Ser-68 the chain carries Phosphoserine. Thr-77 carries the phosphothreonine modification. An FCS-type zinc finger spans residues 82 to 117 (DGSGSEPAVCEMCGIVGTREAFFSKTKRFCSVSCSR). Residues Cys-91, Cys-94, Cys-111, and Cys-115 each contribute to the Zn(2+) site. MBT repeat units follow at residues 180–284 (FDWG…LVPP), 292–392 (TDWK…IKLS), 398–501 (MAHH…LTPP), and 509–605 (FSWE…LQPP). Ser-339 bears the Phosphoserine mark. Lys-406 is covalently cross-linked (Glycyl lysine isopeptide (Lys-Gly) (interchain with G-Cter in SUMO2)). The segment at 606–669 (VATEPTTPLK…KAPSEPAPDE (64 aa)) is disordered. The segment covering 620–635 (TKKKKKQFGKKRKRIP) has biased composition (basic residues). Residues Lys-648, Lys-660, and Lys-676 each participate in a glycyl lysine isopeptide (Lys-Gly) (interchain with G-Cter in SUMO2) cross-link. The tract at residues 685-706 (ADKALSPELPVPVENIKQETDD) is disordered. Ser-690 is subject to Phosphoserine. Lys-701 is covalently cross-linked (Glycyl lysine isopeptide (Lys-Gly) (interchain with G-Cter in SUMO1); alternate). Lys-701 participates in a covalent cross-link: Glycyl lysine isopeptide (Lys-Gly) (interchain with G-Cter in SUMO2); alternate.

As to quaternary structure, part of the E2F6.com-1 complex in G0 phase composed of E2F6, MGA, MAX, TFDP1, CBX3, BAT8, EUHMTASE1, RING1, RNF2, MBLR, BAT8 and YAF2.

It localises to the nucleus. Putative Polycomb group (PcG) protein. PcG proteins maintain the transcriptionally repressive state of genes, probably via a modification of chromatin, rendering it heritably changed in its expressibility. Its association with a chromatin-remodeling complex suggests that it may contribute to prevent expression of genes that trigger the cell into mitosis. Binds to monomethylated and dimethylated 'Lys-20' on histone H4. Binds histone H3 peptides that are monomethylated or dimethylated on 'Lys-4', 'Lys-9' or 'Lys-27'. The chain is Lethal(3)malignant brain tumor-like protein 2 (L3MBTL2) from Bos taurus (Bovine).